Consider the following 378-residue polypeptide: Anhydro-N-acetylmuramic acid kinase (378 aa).

23–30 (GTSMDGAD) contributes to the ATP binding site.

The protein belongs to the anhydro-N-acetylmuramic acid kinase family.

The enzyme catalyses 1,6-anhydro-N-acetyl-beta-muramate + ATP + H2O = N-acetyl-D-muramate 6-phosphate + ADP + H(+). It functions in the pathway amino-sugar metabolism; 1,6-anhydro-N-acetylmuramate degradation. The protein operates within cell wall biogenesis; peptidoglycan recycling. Catalyzes the specific phosphorylation of 1,6-anhydro-N-acetylmuramic acid (anhMurNAc) with the simultaneous cleavage of the 1,6-anhydro ring, generating MurNAc-6-P. Is required for the utilization of anhMurNAc either imported from the medium or derived from its own cell wall murein, and thus plays a role in cell wall recycling. This chain is Anhydro-N-acetylmuramic acid kinase, found in Bordetella pertussis (strain Tohama I / ATCC BAA-589 / NCTC 13251).